Reading from the N-terminus, the 202-residue chain is Virulence protein F (202 aa).

The segment covering 1 to 15 has biased composition (polar residues); the sequence is MRNSSLRDASGSNDA. The disordered stretch occupies residues 1 to 21; it reads MRNSSLRDASGSNDAQVPHKT. Residues 20 to 42 enclose the F-box domain; it reads KTELLNLPDHVLTEVAKRLATNN.

In terms of assembly, component of SCF(virF) E3 ubiquitin ligase complexes. Interacts with host VIP1 and SKP1A. Interacts with Arabidopsis thaliana ENAP1/VFP3 and VFP5 in the host cell nucleus.

It localises to the host nucleus. Functionally, in the host plant, component of SCF(virF) E3 ubiquitin ligase complexes, which mediate the ubiquitination and subsequent proteasomal degradation of target proteins such as the host VIP1, after its implication in T-DNA translocation to the host nucleus. Required for the formation of tumors of a wild-type size on certain plant species only. This is Virulence protein F from Agrobacterium tumefaciens (strain 15955).